Here is a 474-residue protein sequence, read N- to C-terminus: tRNA-2-methylthio-N(6)-dimethylallyladenosine synthase (474 aa).

In terms of domain architecture, MTTase N-terminal spans 3 to 120; that stretch reads KKLLIKTWGC…LPEMIKQSQT (118 aa). 6 residues coordinate [4Fe-4S] cluster: Cys12, Cys49, Cys83, Cys157, Cys161, and Cys164. Residues 143–375 form the Radical SAM core domain; the sequence is RAEGATAFVS…QQTINAQAMR (233 aa). In terms of domain architecture, TRAM spans 378-441; sequence RLMLATEQRV…ANSLRGELVR (64 aa).

This sequence belongs to the methylthiotransferase family. MiaB subfamily. As to quaternary structure, monomer. The cofactor is [4Fe-4S] cluster.

The protein resides in the cytoplasm. The enzyme catalyses N(6)-dimethylallyladenosine(37) in tRNA + (sulfur carrier)-SH + AH2 + 2 S-adenosyl-L-methionine = 2-methylsulfanyl-N(6)-dimethylallyladenosine(37) in tRNA + (sulfur carrier)-H + 5'-deoxyadenosine + L-methionine + A + S-adenosyl-L-homocysteine + 2 H(+). Functionally, catalyzes the methylthiolation of N6-(dimethylallyl)adenosine (i(6)A), leading to the formation of 2-methylthio-N6-(dimethylallyl)adenosine (ms(2)i(6)A) at position 37 in tRNAs that read codons beginning with uridine. This Vibrio parahaemolyticus serotype O3:K6 (strain RIMD 2210633) protein is tRNA-2-methylthio-N(6)-dimethylallyladenosine synthase.